The primary structure comprises 225 residues: Cytidylate kinase (225 aa).

Residue 11–19 (GPAGAGKGT) coordinates ATP. Residues 169-185 (MDRIKSRIEERDARDQS) show a composition bias toward basic and acidic residues. A disordered region spans residues 169 to 195 (MDRIKSRIEERDARDQSRATAPLAAAP).

The protein belongs to the cytidylate kinase family. Type 1 subfamily.

The protein localises to the cytoplasm. The enzyme catalyses CMP + ATP = CDP + ADP. The catalysed reaction is dCMP + ATP = dCDP + ADP. In Magnetococcus marinus (strain ATCC BAA-1437 / JCM 17883 / MC-1), this protein is Cytidylate kinase.